The chain runs to 157 residues: Phosphopantetheine adenylyltransferase (157 aa).

A substrate-binding site is contributed by serine 9. Residues 9–10 and histidine 17 each bind ATP; that span reads SF. Residues lysine 41, valine 73, and lysine 87 each coordinate substrate. ATP contacts are provided by residues 88–90, glutamate 98, and 122–128; these read GLR and YSFVSSS.

It belongs to the bacterial CoaD family. As to quaternary structure, homohexamer. Mg(2+) is required as a cofactor.

The protein resides in the cytoplasm. The catalysed reaction is (R)-4'-phosphopantetheine + ATP + H(+) = 3'-dephospho-CoA + diphosphate. It functions in the pathway cofactor biosynthesis; coenzyme A biosynthesis; CoA from (R)-pantothenate: step 4/5. Reversibly transfers an adenylyl group from ATP to 4'-phosphopantetheine, yielding dephospho-CoA (dPCoA) and pyrophosphate. The chain is Phosphopantetheine adenylyltransferase from Mycobacterium marinum (strain ATCC BAA-535 / M).